Here is a 389-residue protein sequence, read N- to C-terminus: Methane monooxygenase component A beta chain (389 aa).

M.capsulatus has two forms of methane monooxygenase, a soluble and a membrane-bound type. The soluble type consists of four components (A to D): protein A, comprising three chains, in an alpha-2, beta-2, gamma-2 configuration, is a nonheme iron protein containing an unusual mu-hydroxo bridge structure at its active site and interacts with both oxygen and methane.

The enzyme catalyses methane + NADH + O2 + H(+) = methanol + NAD(+) + H2O. It catalyses the reaction methane + NADPH + O2 + H(+) = methanol + NADP(+) + H2O. Its function is as follows. Responsible for the initial oxygenation of methane to methanol in methanotrophs. It also catalyzes the monohydroxylation of a variety of unactivated alkenes, alicyclic, aromatic and heterocyclic compounds. This Methylococcus capsulatus (strain ATCC 33009 / NCIMB 11132 / Bath) protein is Methane monooxygenase component A beta chain (mmoY).